The sequence spans 1058 residues: Vacuolar protein sorting-associated protein 54 (1058 aa).

Positions 369–389 form a coiled coil; sequence SKKIVEVHERYEQKKKLLAKL.

Belongs to the VPS54 family. As to quaternary structure, component of the Golgi-associated retrograde protein (GARP) complex, also called VFT (VPS fifty-three) complex, composed of vps-51, vps-52, vps-53 and vps-54. Within the complex interacts with vps-52 and vps-53.

The protein resides in the golgi apparatus. It localises to the trans-Golgi network. Acts as a component of the GARP complex that is involved in retrograde transport from early and late endosomes to the trans-Golgi network (TGN). The GARP complex facilitates tethering as well as SNARE complex assembly at the Golgi. The sequence is that of Vacuolar protein sorting-associated protein 54 from Caenorhabditis elegans.